The sequence spans 923 residues: Periplasmic nitrate reductase (923 aa).

The segment at residues 1 to 30 (MNRRDFIKNTAIASAASVAGLSVPSSMLGA) is a signal peptide (tat-type signal). A 4Fe-4S Mo/W bis-MGD-type domain is found at 34–90 (WKWDKAVCRFCGTGCGIMIARKDGKIVATKGDPAAPVNRGLNCIKGYFNAKIMYGED). [4Fe-4S] cluster-binding residues include Cys41, Cys44, Cys48, and Cys76. Mo-bis(molybdopterin guanine dinucleotide) contacts are provided by residues Lys78, Gln146, Asn171, Cys175, 208 to 215 (WGANMAEM), Met416, Gln420, Asn526, 551 to 552 (SD), Lys574, Asp601, and 813 to 822 (TGRVLEHWHS). Residue Trp889 participates in substrate binding. Residues Asn897 and Lys914 each coordinate Mo-bis(molybdopterin guanine dinucleotide).

The protein belongs to the prokaryotic molybdopterin-containing oxidoreductase family. NasA/NapA/NarB subfamily. In terms of assembly, component of the periplasmic nitrate reductase NapAB complex composed of NapA and NapB. The cofactor is [4Fe-4S] cluster. It depends on Mo-bis(molybdopterin guanine dinucleotide) as a cofactor. Post-translationally, predicted to be exported by the Tat system. The position of the signal peptide cleavage has not been experimentally proven.

Its subcellular location is the periplasm. The catalysed reaction is 2 Fe(II)-[cytochrome] + nitrate + 2 H(+) = 2 Fe(III)-[cytochrome] + nitrite + H2O. In terms of biological role, catalytic subunit of the periplasmic nitrate reductase complex NapAB. Receives electrons from NapB and catalyzes the reduction of nitrate to nitrite. This chain is Periplasmic nitrate reductase, found in Campylobacter jejuni subsp. jejuni serotype O:23/36 (strain 81-176).